The primary structure comprises 299 residues: Diaminopimelate epimerase (299 aa).

Substrate contacts are provided by N13, Q46, and N66. C75 (proton donor) is an active-site residue. Substrate-binding positions include 76–77, N166, N199, and 217–218; these read GN and ER. The active-site Proton acceptor is C226. A substrate-binding site is contributed by 227 to 228; sequence GT.

It belongs to the diaminopimelate epimerase family. As to quaternary structure, homodimer.

The protein localises to the cytoplasm. It catalyses the reaction (2S,6S)-2,6-diaminopimelate = meso-2,6-diaminopimelate. The protein operates within amino-acid biosynthesis; L-lysine biosynthesis via DAP pathway; DL-2,6-diaminopimelate from LL-2,6-diaminopimelate: step 1/1. Its function is as follows. Catalyzes the stereoinversion of LL-2,6-diaminopimelate (L,L-DAP) to meso-diaminopimelate (meso-DAP), a precursor of L-lysine and an essential component of the bacterial peptidoglycan. In Paraburkholderia phytofirmans (strain DSM 17436 / LMG 22146 / PsJN) (Burkholderia phytofirmans), this protein is Diaminopimelate epimerase.